Consider the following 690-residue polypeptide: Elongation factor G (690 aa).

The tr-type G domain occupies 8 to 282 (ERVRNIGIAA…AVIDYLPAPV (275 aa)). GTP contacts are provided by residues 17 to 24 (AHIDAGKT), 81 to 85 (DTPGH), and 135 to 138 (NKMD).

The protein belongs to the TRAFAC class translation factor GTPase superfamily. Classic translation factor GTPase family. EF-G/EF-2 subfamily.

The protein localises to the cytoplasm. In terms of biological role, catalyzes the GTP-dependent ribosomal translocation step during translation elongation. During this step, the ribosome changes from the pre-translocational (PRE) to the post-translocational (POST) state as the newly formed A-site-bound peptidyl-tRNA and P-site-bound deacylated tRNA move to the P and E sites, respectively. Catalyzes the coordinated movement of the two tRNA molecules, the mRNA and conformational changes in the ribosome. This chain is Elongation factor G, found in Parasynechococcus marenigrum (strain WH8102).